Here is a 143-residue protein sequence, read N- to C-terminus: Midkine (143 aa).

The signal sequence occupies residues 1–20 (MQHRGFLLLTLLALLALTSA). 5 cysteine pairs are disulfide-bonded: C37-C61, C45-C70, C52-C74, C84-C116, and C94-C126.

The protein belongs to the pleiotrophin family. In terms of assembly, homodimer. Interacts with ALK. Interacts with LRP1; promotes neuronal survival. Interacts with LRP2. Interacts with NCAM1. Interacts (via C-terminal) with PTPRZ1 (via chondroitin sulfate chains); this interaction is inhibited by PTN; this interaction promotes neuronal migration. Interacts with NCL; this interaction promotes NCL clustering and lateral movements of this complex into lipid rafts leading to MDK internalization. Interacts with LRP6 and LRP8: this interaction is calcium dependent. Interacts with ITGA4. Interacts with ITGA6. Interacts with ITGB1. Interacts with ITGA4:ITGB1 complex; this interaction mediates MDK-induced osteoblast cells migration through PXN phosphorylation. Interacts with ITGA6:ITGB1 complex; this interaction mediates MDK-induced neurite outgrowth. Interacts with NOTCH2; this interaction mediates a nuclear accumulation of NOTCH2 and therefore activation of NOTCH2 signaling leading to interaction between HES1 and STAT3. Interacts with GPC2 (via heparan sulfate chain); this interaction is inhibited by heparin followed by chondroitin sulfate E; this interaction induces GPC2 clustering through heparan sulfate chain; this interaction induces neuronal cell adhesion and neurite outgrowth. Interacts with SDC3; this interaction induces SDC3 clustering; this interaction induces neuronal cell adhesion and neurite outgrowth. Interacts with SDC1. Interacts with CSPG5; this interaction promotes elongation of oligodendroglial precursor-like cells. Expressed in various tumor cell lines. In insulinoma tissue predominantly expressed in precancerous lesions.

It is found in the secreted. Secreted protein that functions as a cytokine and growth factor and mediates its signal through cell-surface proteoglycan and non-proteoglycan receptors. Binds cell-surface proteoglycan receptors via their chondroitin sulfate (CS) groups. Thereby regulates many processes like inflammatory response, cell proliferation, cell adhesion, cell growth, cell survival, tissue regeneration, cell differentiation and cell migration. Participates in inflammatory processes by exerting two different activities. Firstly, mediates neutrophils and macrophages recruitment to the sites of inflammation both by direct action by cooperating namely with ITGB2 via LRP1 and by inducing chemokine expression. This inflammation can be accompanied by epithelial cell survival and smooth muscle cell migration after renal and vessel damage, respectively. Secondly, suppresses the development of tolerogenic dendric cells thereby inhibiting the differentiation of regulatory T cells and also promote T cell expansion through NFAT signaling and Th1 cell differentiation. Promotes tissue regeneration after injury or trauma. After heart damage negatively regulates the recruitment of inflammatory cells and mediates cell survival through activation of anti-apoptotic signaling pathways via MAPKs and AKT pathways through the activation of angiogenesis. Also facilitates liver regeneration as well as bone repair by recruiting macrophage at trauma site and by promoting cartilage development by facilitating chondrocyte differentiation. Plays a role in brain by promoting neural precursor cells survival and growth through interaction with heparan sulfate proteoglycans. Binds PTPRZ1 and promotes neuronal migration and embryonic neurons survival. Binds SDC3 or GPC2 and mediates neurite outgrowth and cell adhesion. Binds chondroitin sulfate E and heparin leading to inhibition of neuronal cell adhesion induced by binding with GPC2. Binds CSPG5 and promotes elongation of oligodendroglial precursor-like cells. Also binds ITGA6:ITGB1 complex; this interaction mediates MDK-induced neurite outgrowth. Binds LRP1; promotes neuronal survival. Binds ITGA4:ITGB1 complex; this interaction mediates MDK-induced osteoblast cells migration through PXN phosphorylation. Binds anaplastic lymphoma kinase (ALK) which induces ALK activation and subsequent phosphorylation of the insulin receptor substrate (IRS1), followed by the activation of mitogen-activated protein kinase (MAPK) and PI3-kinase, and the induction of cell proliferation. Promotes epithelial to mesenchymal transition through interaction with NOTCH2. During arteriogenesis, plays a role in vascular endothelial cell proliferation by inducing VEGFA expression and release which in turn induces nitric oxide synthase expression. Moreover activates vasodilation through nitric oxide synthase activation. Negatively regulates bone formation in response to mechanical load by inhibiting Wnt/beta-catenin signaling in osteoblasts. In addition plays a role in hippocampal development, working memory, auditory response, early fetal adrenal gland development and the female reproductive system. This Homo sapiens (Human) protein is Midkine.